The sequence spans 31 residues: Palustrin-2c (31 aa).

Residues cysteine 23 and cysteine 29 are joined by a disulfide bond.

As to expression, expressed by the skin glands.

It is found in the secreted. Its function is as follows. Antimicrobial activity against Gram-negative bacterium E.coli. The chain is Palustrin-2c from Lithobates palustris (Pickerel frog).